The sequence spans 444 residues: ATP-dependent protease ATPase subunit HslU (444 aa).

ATP-binding positions include isoleucine 20 and 62–67 (GVGKTE). The interval 130–158 (EDRILDALVPPPRGASGEPERGEDNSARQ) is disordered. ATP is bound by residues aspartate 257, glutamate 322, and arginine 394.

The protein belongs to the ClpX chaperone family. HslU subfamily. In terms of assembly, a double ring-shaped homohexamer of HslV is capped on each side by a ring-shaped HslU homohexamer. The assembly of the HslU/HslV complex is dependent on binding of ATP.

Its subcellular location is the cytoplasm. Its function is as follows. ATPase subunit of a proteasome-like degradation complex; this subunit has chaperone activity. The binding of ATP and its subsequent hydrolysis by HslU are essential for unfolding of protein substrates subsequently hydrolyzed by HslV. HslU recognizes the N-terminal part of its protein substrates and unfolds these before they are guided to HslV for hydrolysis. This Bordetella pertussis (strain Tohama I / ATCC BAA-589 / NCTC 13251) protein is ATP-dependent protease ATPase subunit HslU.